Consider the following 221-residue polypeptide: Endonuclease V (221 aa).

Mg(2+) contacts are provided by D44 and D112.

The protein belongs to the endonuclease V family. Requires Mg(2+) as cofactor.

It is found in the cytoplasm. The catalysed reaction is Endonucleolytic cleavage at apurinic or apyrimidinic sites to products with a 5'-phosphate.. In terms of biological role, DNA repair enzyme involved in the repair of deaminated bases. Selectively cleaves double-stranded DNA at the second phosphodiester bond 3' to a deoxyinosine leaving behind the intact lesion on the nicked DNA. The protein is Endonuclease V of Nostoc punctiforme (strain ATCC 29133 / PCC 73102).